The primary structure comprises 73 residues: Frenatin 3.1 (73 aa).

Residues 1-22 form the signal peptide; sequence MHFLKKSIFLVLFLGLVSLSIC. The propeptide occupies 23–46; that stretch reads EKEKREDQNEEEVDENEEASEEKR. The tract at residues 25 to 45 is disordered; sequence EKREDQNEEEVDENEEASEEK. The segment covering 30–42 has biased composition (acidic residues); that stretch reads QNEEEVDENEEAS.

In terms of tissue distribution, expressed by the skin glands.

It is found in the secreted. Antimicrobial peptide with activity against both Gram-positive and Gram-negative bacteria. In Nyctimystes infrafrenatus (White-lipped tree frog), this protein is Frenatin 3.1.